A 485-amino-acid polypeptide reads, in one-letter code: Inosine-5'-monophosphate dehydrogenase (485 aa).

CBS domains follow at residues 99 to 154 (IVED…LVKE) and 156 to 215 (MTKD…VRDE). NAD(+)-binding positions include Asp-247 and 294 to 296 (GIG). The K(+) site is built by Gly-296 and Gly-298. Ser-299 contacts IMP. Cys-301 provides a ligand contact to K(+). Cys-301 acts as the Thioimidate intermediate in catalysis. IMP-binding positions include 334–336 (DGG), 357–358 (GN), and 381–385 (YRGMG). Arg-397 acts as the Proton acceptor in catalysis. Glu-412 is a binding site for IMP. Residues Glu-466, Ser-467, and His-468 each contribute to the K(+) site.

This sequence belongs to the IMPDH/GMPR family. Homotetramer. It depends on K(+) as a cofactor.

It carries out the reaction IMP + NAD(+) + H2O = XMP + NADH + H(+). The protein operates within purine metabolism; XMP biosynthesis via de novo pathway; XMP from IMP: step 1/1. With respect to regulation, mycophenolic acid (MPA) is a non-competitive inhibitor that prevents formation of the closed enzyme conformation by binding to the same site as the amobile flap. In contrast, mizoribine monophosphate (MZP) is a competitive inhibitor that induces the closed conformation. MPA is a potent inhibitor of mammalian IMPDHs but a poor inhibitor of the bacterial enzymes. MZP is a more potent inhibitor of bacterial IMPDH. Functionally, catalyzes the conversion of inosine 5'-phosphate (IMP) to xanthosine 5'-phosphate (XMP), the first committed and rate-limiting step in the de novo synthesis of guanine nucleotides, and therefore plays an important role in the regulation of cell growth. The polypeptide is Inosine-5'-monophosphate dehydrogenase (Pyrococcus abyssi (strain GE5 / Orsay)).